The sequence spans 81 residues: ATP synthase subunit c, chloroplastic (81 aa).

The next 2 membrane-spanning stretches (helical) occupy residues 3–23 (PLIS…ASIG) and 53–73 (LLLS…VALA).

This sequence belongs to the ATPase C chain family. In terms of assembly, F-type ATPases have 2 components, F(1) - the catalytic core - and F(0) - the membrane proton channel. F(1) has five subunits: alpha(3), beta(3), gamma(1), delta(1), epsilon(1). F(0) has four main subunits: a(1), b(1), b'(1) and c(10-14). The alpha and beta chains form an alternating ring which encloses part of the gamma chain. F(1) is attached to F(0) by a central stalk formed by the gamma and epsilon chains, while a peripheral stalk is formed by the delta, b and b' chains.

The protein localises to the plastid. The protein resides in the chloroplast thylakoid membrane. Functionally, f(1)F(0) ATP synthase produces ATP from ADP in the presence of a proton or sodium gradient. F-type ATPases consist of two structural domains, F(1) containing the extramembraneous catalytic core and F(0) containing the membrane proton channel, linked together by a central stalk and a peripheral stalk. During catalysis, ATP synthesis in the catalytic domain of F(1) is coupled via a rotary mechanism of the central stalk subunits to proton translocation. Its function is as follows. Key component of the F(0) channel; it plays a direct role in translocation across the membrane. A homomeric c-ring of between 10-14 subunits forms the central stalk rotor element with the F(1) delta and epsilon subunits. The sequence is that of ATP synthase subunit c, chloroplastic from Angiopteris evecta (Mule's foot fern).